The chain runs to 389 residues: TelA-like protein SH1505 (389 aa).

It belongs to the TelA family.

This chain is TelA-like protein SH1505, found in Staphylococcus haemolyticus (strain JCSC1435).